The chain runs to 349 residues: Lachesin (349 aa).

A signal peptide spans Met1–Ala18. Positions Pro22–Gln127 constitute an Ig-like V-type domain. Cys43 and Cys110 form a disulfide bridge. 2 consecutive Ig-like C2-type domains span residues Pro132–Glu218 and Pro222–Phe315. The N-linked (GlcNAc...) asparagine glycan is linked to Asn137. 2 cysteine pairs are disulfide-bonded: Cys154–Cys201 and Cys244–Cys299. Gly332 is lipidated: GPI-anchor amidated glycine. The propeptide at Asp333–Ile349 is removed in mature form.

Post-translationally, the N-terminus is blocked. In terms of tissue distribution, expressed by all neurogenic cells early, but only those cells that become neuroblasts continue to express it. Expressed by neuroblasts, ganglion mother cells and neurons early in their lives, but expression becomes restricted to a subset of neurons as development progresses. Expressed by sensory neurons as they delaminate from the body wall ectoderm. It is also present on growing axons of the CNS and PNS and becomes restricted to a subset of axons later in development.

It localises to the cell membrane. In terms of biological role, may play a role in early neuronal differentiation and axon outgrowth. The sequence is that of Lachesin (LAC) from Schistocerca americana (American grasshopper).